A 61-amino-acid polypeptide reads, in one-letter code: Short neurotoxin 2 (61 aa).

Intrachain disulfides connect cysteine 3/cysteine 23, cysteine 17/cysteine 40, cysteine 42/cysteine 53, and cysteine 54/cysteine 59.

The protein belongs to the three-finger toxin family. Short-chain subfamily. Type I alpha-neurotoxin sub-subfamily. In terms of tissue distribution, expressed by the venom gland.

Its subcellular location is the secreted. Functionally, binds to muscle nicotinic acetylcholine receptor (nAChR) and inhibit acetylcholine from binding to the receptor, thereby impairing neuromuscular transmission. This chain is Short neurotoxin 2, found in Naja haje haje (Egyptian cobra).